Here is a 307-residue protein sequence, read N- to C-terminus: Taste receptor type 2 member 41 (307 aa).

Over 1–7 (MQAALTA) the chain is Extracellular. A helical transmembrane segment spans residues 8–28 (FFMLLFSLLSLLGIAANGFIV). Topologically, residues 29–40 (LVLGREWLRYGR) are cytoplasmic. The chain crosses the membrane as a helical span at residues 41–61 (LLPLDMILISLGASRFCLQLV). The Extracellular portion of the chain corresponds to 62-88 (GTVHNFYYSAQKVEYSGGLGRQFFHLH). Residues 89–109 (WHFLNSATFWFCSWLSVLFCV) traverse the membrane as a helical segment. Residues 110-129 (KIANITHPTFLWLKWRFPAW) lie on the Cytoplasmic side of the membrane. A helical membrane pass occupies residues 130-150 (VPWLLLGSVLISFIITLLFFW). The Extracellular segment spans residues 151 to 183 (VNYPAYQEFLIRKFSVNMTYKWNTRIETYYFPS). N-linked (GlcNAc...) asparagine glycosylation occurs at Asn-167. A helical transmembrane segment spans residues 184–204 (LKLVIWSIPFSVFLVSIMLLI). Residues 205 to 234 (NSLRRHTQRMQHNGHSLQDPSTQAHTRALK) are Cytoplasmic-facing. Residues 235–255 (SLISFLILYALSFLSLIIDAT) form a helical membrane-spanning segment. Residues 256–264 (KFISMQNDF) lie on the Extracellular side of the membrane. The helical transmembrane segment at 265–285 (YWPWQIAVYLCISIHPFILIF) threads the bilayer. Over 286 to 307 (SNLKLRSVFSQLLLLARGFWVA) the chain is Cytoplasmic.

The protein belongs to the G-protein coupled receptor T2R family.

It localises to the membrane. Receptor that may play a role in the perception of bitterness and is gustducin-linked. May play a role in sensing the chemical composition of the gastrointestinal content. The activity of this receptor may stimulate alpha gustducin, mediate PLC-beta-2 activation and lead to the gating of TRPM5. The chain is Taste receptor type 2 member 41 (TAS2R41) from Pan paniscus (Pygmy chimpanzee).